Consider the following 221-residue polypeptide: Large ribosomal subunit protein uL4 (221 aa).

The tract at residues 45 to 100 is disordered; that stretch reads ARQGTHKTKNRGEVSGAGRKPFKQKGTGRARQGSIRAPQMTGGGIVHGPTPRDYSQ.

The protein belongs to the universal ribosomal protein uL4 family. In terms of assembly, part of the 50S ribosomal subunit.

Its function is as follows. One of the primary rRNA binding proteins, this protein initially binds near the 5'-end of the 23S rRNA. It is important during the early stages of 50S assembly. It makes multiple contacts with different domains of the 23S rRNA in the assembled 50S subunit and ribosome. Forms part of the polypeptide exit tunnel. The protein is Large ribosomal subunit protein uL4 of Leifsonia xyli subsp. xyli (strain CTCB07).